We begin with the raw amino-acid sequence, 314 residues long: Homoserine kinase (314 aa).

96–106 is a binding site for ATP; the sequence is PIGSGLGSSAC.

It belongs to the GHMP kinase family. Homoserine kinase subfamily.

Its subcellular location is the cytoplasm. The enzyme catalyses L-homoserine + ATP = O-phospho-L-homoserine + ADP + H(+). Its pathway is amino-acid biosynthesis; L-threonine biosynthesis; L-threonine from L-aspartate: step 4/5. In terms of biological role, catalyzes the ATP-dependent phosphorylation of L-homoserine to L-homoserine phosphate. In Histophilus somni (strain 129Pt) (Haemophilus somnus), this protein is Homoserine kinase.